The chain runs to 456 residues: Adenylosuccinate synthetase (456 aa).

Residues 11-17 and 39-41 each bind GTP; these read GDEGKGG and GHT. Residue Asp-12 is the Proton acceptor of the active site. Residues Asp-12 and Gly-39 each coordinate Mg(2+). Residues 12–15, 37–40, Thr-127, Arg-141, Gln-232, Thr-247, and Arg-328 each bind IMP; these read DEGK and NAGH. His-40 acts as the Proton donor in catalysis. 324-330 contacts substrate; that stretch reads TVTGRPR. GTP contacts are provided by residues Arg-330, 356–358, and 441–443; these read HLD and GVG.

Belongs to the adenylosuccinate synthetase family. As to quaternary structure, homodimer. Mg(2+) is required as a cofactor.

Its subcellular location is the cytoplasm. The catalysed reaction is IMP + L-aspartate + GTP = N(6)-(1,2-dicarboxyethyl)-AMP + GDP + phosphate + 2 H(+). Its pathway is purine metabolism; AMP biosynthesis via de novo pathway; AMP from IMP: step 1/2. In terms of biological role, plays an important role in the de novo pathway of purine nucleotide biosynthesis. Catalyzes the first committed step in the biosynthesis of AMP from IMP. The chain is Adenylosuccinate synthetase from Natronomonas pharaonis (strain ATCC 35678 / DSM 2160 / CIP 103997 / JCM 8858 / NBRC 14720 / NCIMB 2260 / Gabara) (Halobacterium pharaonis).